Here is a 105-residue protein sequence, read N- to C-terminus: Met repressor (105 aa).

The protein belongs to the MetJ family. As to quaternary structure, homodimer.

The protein resides in the cytoplasm. This regulatory protein, when combined with SAM (S-adenosylmethionine) represses the expression of the methionine regulon and of enzymes involved in SAM synthesis. The sequence is that of Met repressor from Pasteurella multocida (strain Pm70).